The primary structure comprises 424 residues: Gamma-glutamyl phosphate reductase (424 aa).

Residues 1–27 form a disordered region; it reads MSVEAQSRSGAVDTQEPADLREQVHSA.

This sequence belongs to the gamma-glutamyl phosphate reductase family.

It is found in the cytoplasm. The catalysed reaction is L-glutamate 5-semialdehyde + phosphate + NADP(+) = L-glutamyl 5-phosphate + NADPH + H(+). The protein operates within amino-acid biosynthesis; L-proline biosynthesis; L-glutamate 5-semialdehyde from L-glutamate: step 2/2. In terms of biological role, catalyzes the NADPH-dependent reduction of L-glutamate 5-phosphate into L-glutamate 5-semialdehyde and phosphate. The product spontaneously undergoes cyclization to form 1-pyrroline-5-carboxylate. The protein is Gamma-glutamyl phosphate reductase of Mycolicibacterium smegmatis (strain ATCC 700084 / mc(2)155) (Mycobacterium smegmatis).